The primary structure comprises 430 residues: Delta-aminolevulinic acid dehydratase 1, chloroplastic (430 aa).

Residues 1-52 (MATTPIFNASCSFPSTRGIDCKSYIGLRSNVSKVSVASSRIATSQRRNLVVR) constitute a chloroplast transit peptide. The segment covering 82–91 (EAPPVPPKPA) has biased composition (pro residues). Residues 82–101 (EAPPVPPKPAAPVGTPIIKP) are disordered. Lys-298 functions as the Schiff-base intermediate with substrate in the catalytic mechanism. The 5-aminolevulinate site is built by Arg-308 and Lys-320. Glu-336 provides a ligand contact to Mg(2+). The Schiff-base intermediate with substrate role is filled by Lys-351. 5-aminolevulinate contacts are provided by Ser-377 and Tyr-416.

Belongs to the ALAD family. In terms of assembly, homooctamer. Mg(2+) serves as cofactor. As to expression, highly expressed in cotyledons during dark-to-light transition.

The protein localises to the plastid. The protein resides in the chloroplast. It catalyses the reaction 2 5-aminolevulinate = porphobilinogen + 2 H2O + H(+). It functions in the pathway porphyrin-containing compound metabolism; protoporphyrin-IX biosynthesis; coproporphyrinogen-III from 5-aminolevulinate: step 1/4. It participates in porphyrin-containing compound metabolism; chlorophyll biosynthesis. In terms of biological role, catalyzes an early step in the biosynthesis of tetrapyrroles. Binds two molecules of 5-aminolevulinate per subunit, each at a distinct site, and catalyzes their condensation to form porphobilinogen. The polypeptide is Delta-aminolevulinic acid dehydratase 1, chloroplastic (HEMB1) (Arabidopsis thaliana (Mouse-ear cress)).